The following is a 122-amino-acid chain: Large ribosomal subunit protein uL14 (122 aa).

It belongs to the universal ribosomal protein uL14 family. In terms of assembly, part of the 50S ribosomal subunit. Forms a cluster with proteins L3 and L19. In the 70S ribosome, L14 and L19 interact and together make contacts with the 16S rRNA in bridges B5 and B8.

In terms of biological role, binds to 23S rRNA. Forms part of two intersubunit bridges in the 70S ribosome. The polypeptide is Large ribosomal subunit protein uL14 (Lactococcus lactis subsp. lactis (strain IL1403) (Streptococcus lactis)).